We begin with the raw amino-acid sequence, 1140 residues long: MTTELTNVSLEEAITEKTSENRRKRDSDVLQTEEVDLSNVKRIRASRNQDNRPERQSRLQRSSSLIEQVRGNEDGENDVLNQTRETNSNFDNRVGVIECIHLVNFMCHDSLKINFGPRINFVIGHNGSGKSAILTGLTICLGAKASNTNRAPNMKSLVKQGKNYARISVTISNRGFEAYQPEIYGKSITIERTIRREGSSEYRLRSFNGTVISTKRDELDNICDHMGLQIDNPMNILTQDTARQFLGNSSPKEKYQLFMKGIQLKQLEENYSLIEQSLINTKNVLGNKKTGVSYLAKKEEEYKLLWEQSRETENLHNLLEQKKGEMVWAQVVEVEKELLLAEKEFQHAEVKLSEAKENLESIVTNQSDIDGKISSKEEVIGRAKGETDTTKSKFEDIVKTFDGYRSEMNDVDIQKRDIQNSINAAKSCLDVYREQLNTERARENNLGGSQIEKRANESNNLQREIADLSEQIVELESKRNDLHSALLEMGGNLTSLLTKKDSIANKISDQSEHLKVLEDVQRDKVSAFGKNMPQLLKLITRETRFQHPPKGPMGKYMTVKEQKWHLIIERILGNVINGFIVRSHHDQLILKELMRQSNCHATVVVGKYDPFDYSSGEPDSQYPTVLKIIKFDDDEVLHTLINHLGIEKMLLIEDRREAEAYMKRGIANVTQCYALDPRNRGYGFRIVSTQRSSGISKVTPWNRPPRIGFSSSTSIEAEKKILDDLKKQYNFASNQLNEAKIEQAKFKRDEQLLVEKIEGIKKRILLKRREVNSLESQELSVLDTEKIQTLERRISETEKELESYAGQLQDAKNEEHRIRDNQRPVIEEIRIYREKIQTETQRLSSLQTELSRLRDEKRNSEVDIERHRQTVESCTNILREKEAKKVQCAQVVADYTAKANTRCERVPVQLSPAELDNEIERLQMQIAEWRNRTGVSVEQAAEDYLNAKEKHDQAKVLVARLTQLLQALEETLRRRNEMWTKFRKLITLRTKELFELYLSQRNFTGKLVIKHQEEFLEPRVYPANRNLATAHNRHEKSKVSVQGLSGGEKSFATICMLLSIWEAMSCPLRCLDEFDVFMDAVNRLVSIKMMVDSAKDSSDKQFIFITPQDMGQIGLDKDVVVFRLSDPVVSSSALPPSTAP.

Residues 1–63 are disordered; the sequence is MTTELTNVSL…ERQSRLQRSS (63 aa). Basic and acidic residues predominate over residues 14-28; that stretch reads ITEKTSENRRKRDSD. Short sequence motifs (nuclear localization signal) lie at residues 22–25 and 41–44; these read RRKR and KRIR. Residues 47 to 57 are compositionally biased toward basic and acidic residues; the sequence is RNQDNRPERQS. 124-131 serves as a coordination point for ATP; the sequence is GHNGSGKS. Coiled-coil stretches lie at residues 262 to 290, 329 to 369, and 448 to 493; these read IQLK…NKKT, AQVV…QSDI, and GSQI…GGNL. Residues 494-710 are flexible hinge; it reads TSLLTKKDSI…WNRPPRIGFS (217 aa). 2 coiled-coil regions span residues 711–978 and 1113–1140; these read SSTS…RNEM and IGLD…STAP.

It belongs to the SMC family. SMC6 subfamily. As to quaternary structure, two subcomplexes smc5-smc6-nse2 and nse1-nse3-nse4 exist. These subcomplexes are then brought together via a number of interactions, forming the Smc5-Smc6 complex. In terms of processing, sumoylated by nse2.

Its subcellular location is the nucleus. The protein resides in the chromosome. Functionally, acts in a DNA repair pathway for removal of UV-induced DNA damage that is distinct from classical nucleotide excision repair and in repair of ionizing radiation damage. Functions in homologous recombination repair of DNA double strand breaks and in recovery of stalled replication forks. Plays a critical role in meiosis. The protein is Structural maintenance of chromosomes protein 6 (smc6) of Schizosaccharomyces pombe (strain 972 / ATCC 24843) (Fission yeast).